The primary structure comprises 80 residues: Toxin-like peptide AaF1CA1 (80 aa).

An N-terminal signal peptide occupies residues 1–22; that stretch reads MMKLVLFSVIVILFSLIGSIHG. Positions 25–80 constitute an LCN-type CS-alpha/beta domain; that stretch reads VPGNYPLRPFRYRYGCAVPGDSDYCVRVCRKHGVRYGYCWFFTCWCEYLEDKNIKI. 3 disulfides stabilise this stretch: Cys-40/Cys-63, Cys-49/Cys-68, and Cys-53/Cys-70.

Belongs to the long (3 C-C) scorpion toxin superfamily. In terms of tissue distribution, expressed by the venom gland.

The protein resides in the secreted. Functionally, probable ion channel inhibitor. The chain is Toxin-like peptide AaF1CA1 from Androctonus australis (Sahara scorpion).